A 108-amino-acid polypeptide reads, in one-letter code: Tubulin-specific chaperone A (108 aa).

Ala-2 is subject to N-acetylalanine.

It belongs to the TBCA family. Supercomplex made of cofactors A to E. Cofactors A and D function by capturing and stabilizing tubulin in a quasi-native conformation. Cofactor E binds to the cofactor D-tubulin complex; interaction with cofactor C then causes the release of tubulin polypeptides that are committed to the native state. Widely expressed, but is most abundant in the testis.

The protein localises to the cytoplasm. Its subcellular location is the cytoskeleton. Functionally, tubulin-folding protein; involved in the early step of the tubulin folding pathway. The sequence is that of Tubulin-specific chaperone A (TBCA) from Bos taurus (Bovine).